Reading from the N-terminus, the 669-residue chain is Exostosin-like 1 (669 aa).

At 1–8 the chain is on the cytoplasmic side; sequence MLWRRKSF. A helical; Signal-anchor for type II membrane protein transmembrane segment spans residues 9-29; sequence WLALSAFWLLLVLLGVFPLRL. Over 30–669 the chain is Lumenal; it reads AVLPGPLPGR…RKKYRSLEKP (640 aa). Residues Asn-263 and Asn-480 are each glycosylated (N-linked (GlcNAc...) asparagine). Residues Cys-577 and Cys-627 are joined by a disulfide bond. The disordered stretch occupies residues 601 to 621; that stretch reads RQHPEAVPMDSGDPRPVPEPQ.

Belongs to the glycosyltransferase 47 family.

It is found in the endoplasmic reticulum membrane. The catalysed reaction is 3-O-{[(1-&gt;4)-beta-D-GlcA-(1-&gt;4)-alpha-D-GlcNAc](n)-(1-&gt;4)-beta-D-GlcA-(1-&gt;3)-beta-D-Gal-(1-&gt;3)-beta-D-Gal-(1-&gt;4)-beta-D-Xyl}-L-seryl-[protein] + UDP-N-acetyl-alpha-D-glucosamine = 3-O-{alpha-D-GlcNAc-[(1-&gt;4)-beta-D-GlcA-(1-&gt;4)-alpha-D-GlcNAc](n)-(1-&gt;4)-beta-D-GlcA-(1-&gt;3)-beta-D-Gal-(1-&gt;3)-beta-D-Gal-(1-&gt;4)-beta-D-Xyl}-L-seryl-[protein] + UDP + H(+). The protein operates within protein modification; protein glycosylation. Functionally, glycosyltransferase required for the biosynthesis of heparan-sulfate (HS). Transfers N-acetyl-alpha-D-glucosamine to the nascent HS chain (GlcNAcT-II activity). Appears to lack GlcNAcT I and GlcAT-II activities. The polypeptide is Exostosin-like 1 (Extl1) (Mus musculus (Mouse)).